The sequence spans 371 residues: Probable diguanylate cyclase DgcC (371 aa).

5 consecutive transmembrane segments (helical) span residues 46–66 (AVGL…HPPP), 68–88 (WWWL…WQIA), 112–132 (WVGV…IMCL), 143–163 (FVAG…LTGI), and 171–191 (PLEW…FGWV). Residues 240–371 (RDATLLIIDI…AGRNRTEVAA (132 aa)) form the GGDEF domain. Mg(2+) is bound by residues Asp248 and Ile249. The substrate site is built by Asn256 and Asp265. Position 291 (Asp291) interacts with Mg(2+).

Requires Mg(2+) as cofactor.

It localises to the cell inner membrane. It carries out the reaction 2 GTP = 3',3'-c-di-GMP + 2 diphosphate. Its pathway is purine metabolism; 3',5'-cyclic di-GMP biosynthesis. Its function is as follows. A probable diguanylate cyclase. The last member of a cascade of expressed proteins, its expression requires DgcM. DgcC production induces biosynthesis of cellulose in some E.coli isolates, but not in K12 strains. Cyclic-di-GMP is a second messenger which controls cell surface-associated traits in bacteria. In Escherichia coli (strain K12), this protein is Probable diguanylate cyclase DgcC.